The following is a 951-amino-acid chain: Exportin-2 (951 aa).

Residues 29-104 form the Importin N-terminal domain; the sequence is ATSKIQKFVK…KSLLLNFILS (76 aa).

The protein belongs to the XPO2/CSE1 family.

The protein resides in the cytoplasm. It localises to the nucleus. Export receptor for importin alpha. Mediates importin-alpha re-export from the nucleus to the cytoplasm after import substrates have been released into the nucleoplasm. The polypeptide is Exportin-2 (xpo2) (Dictyostelium discoideum (Social amoeba)).